Consider the following 224-residue polypeptide: Lipoprotein-releasing system ATP-binding protein LolD (224 aa).

The ABC transporter domain occupies 5–224; the sequence is LVLDGLTKAY…VVRLEAGRVV (220 aa). An ATP-binding site is contributed by 42–49; that stretch reads APSGAGKS.

The protein belongs to the ABC transporter superfamily. Lipoprotein translocase (TC 3.A.1.125) family. In terms of assembly, the complex is composed of two ATP-binding proteins (LolD) and two transmembrane proteins (LolC and LolE).

Its subcellular location is the cell inner membrane. Its function is as follows. Part of the ABC transporter complex LolCDE involved in the translocation of mature outer membrane-directed lipoproteins, from the inner membrane to the periplasmic chaperone, LolA. Responsible for the formation of the LolA-lipoprotein complex in an ATP-dependent manner. This is Lipoprotein-releasing system ATP-binding protein LolD from Cereibacter sphaeroides (strain ATCC 17023 / DSM 158 / JCM 6121 / CCUG 31486 / LMG 2827 / NBRC 12203 / NCIMB 8253 / ATH 2.4.1.) (Rhodobacter sphaeroides).